Here is a 386-residue protein sequence, read N- to C-terminus: S-adenosylmethionine synthase (386 aa).

ATP is bound at residue H16. D18 lines the Mg(2+) pocket. E44 contacts K(+). Residues E57 and Q100 each contribute to the L-methionine site. Positions 100–110 are flexible loop; the sequence is QSRDITQGVDR. Residues 165–167, D240, 246–247, A263, and K267 contribute to the ATP site; these read DAK and RK. D240 contributes to the L-methionine binding site. An L-methionine-binding site is contributed by K271.

The protein belongs to the AdoMet synthase family. In terms of assembly, homotetramer; dimer of dimers. Mg(2+) serves as cofactor. K(+) is required as a cofactor.

The protein localises to the cytoplasm. It carries out the reaction L-methionine + ATP + H2O = S-adenosyl-L-methionine + phosphate + diphosphate. It participates in amino-acid biosynthesis; S-adenosyl-L-methionine biosynthesis; S-adenosyl-L-methionine from L-methionine: step 1/1. Catalyzes the formation of S-adenosylmethionine (AdoMet) from methionine and ATP. The overall synthetic reaction is composed of two sequential steps, AdoMet formation and the subsequent tripolyphosphate hydrolysis which occurs prior to release of AdoMet from the enzyme. The sequence is that of S-adenosylmethionine synthase from Francisella tularensis subsp. tularensis (strain WY96-3418).